Reading from the N-terminus, the 622-residue chain is Iron transport multicopper oxidase fetC (622 aa).

An N-terminal signal peptide occupies residues 1–20 (MARLVHLTAVLAASIRLAAA). Over 21–552 (ATINHDFNVT…DPLPAGFTTR (532 aa)) the chain is Extracellular. N-linked (GlcNAc...) asparagine glycosylation is found at Asn28 and Asn74. Plastocyanin-like domains lie at 29–144 (VTWV…VHDP) and 154–301 (EEIV…SYDK). The Cu cation site is built by His80 and His82. N-linked (GlcNAc...) asparagine glycans are attached at residues Asn87 and Asn112. Residues His124 and His126 each contribute to the Cu cation site. Residues Asn194, Asn198, Asn265, Asn292, and Asn358 are each glycosylated (N-linked (GlcNAc...) asparagine). One can recognise a Plastocyanin-like 3 domain in the interval 362-497 (KSPKVPTLYS…GLVATFVEAP (136 aa)). Residues His412, His415, and His417 each contribute to the Cu cation site. N-linked (GlcNAc...) asparagine glycosylation is present at Asn428. Cu cation-binding residues include His478, Cys479, His480, and His484. A helical membrane pass occupies residues 553–573 (GIVALVFSCVTGILGICVVAW). The Cytoplasmic portion of the chain corresponds to 574–622 (YGMSQPLEEATAAVATLVREAQVTGSGTSPNHDDGNAAATEAGVLRRRT). The interval 597 to 622 (TGSGTSPNHDDGNAAATEAGVLRRRT) is disordered.

It belongs to the multicopper oxidase family.

Its subcellular location is the cell membrane. In terms of biological role, cell surface ferroxidase; part of the reductive iron assimilatory system (RIA), a siderophore-independent high affinity iron uptake mechanism. Required to oxidize Fe(2+) and release it from the transporter. In Epichloe festucae (strain E2368), this protein is Iron transport multicopper oxidase fetC.